The chain runs to 358 residues: U5 small nuclear ribonucleoprotein 40 kDa protein (358 aa).

Lys-18 participates in a covalent cross-link: Glycyl lysine isopeptide (Lys-Gly) (interchain with G-Cter in SUMO2). Asymmetric dimethylarginine is present on Arg-21. WD repeat units follow at residues 65–104 (GHEGEVYCCKFHPNGSTLASAGFDRLILLWNVYGDCDNYA), 108–147 (GHSGAVMELHYNTDGSMLFSASTDKTVAVWDSETGERVKR), 150–190 (GHTS…AIQT), 192–231 (QNTYQVLAVTFNDTSDQIISGGIDNDIKVWDLRQNKLTYT), 234–273 (GHADSVTGLSLSSEGSYLLSNAMDNTVRVWDVRPFAPKER), 284–323 (NFEKNLLRCSWSPDGSKIAAGSADRFVYVWDTTSRRILYK), and 326–358 (GHAGSINEVAFHPDEPIILSASSDKRLYMGEIQ). A Glycyl lysine isopeptide (Lys-Gly) (interchain with G-Cter in SUMO2) cross-link involves residue Lys-271.

In terms of assembly, component of the pre-catalytic and catalytic spliceosome complexes. Component of the postcatalytic spliceosome P complex. Part of the U5 snRNP complex. Interacts with PRPF8. Component of the U4/U6-U5 tri-snRNP complex composed of the U4, U6 and U5 snRNAs and at least PRPF3, PRPF4, PRPF6, PRPF8, PRPF31, SNRNP200, TXNL4A, WDR57, SNRNP40, DDX23, CD2BP2, PPIH, SNU13, EFTUD2, SART1 and USP39. Component of the minor spliceosome, which splices U12-type introns.

Its subcellular location is the nucleus. Functionally, required for pre-mRNA splicing as component of the activated spliceosome. Component of the U5 small nuclear ribonucleoprotein (snRNP) complex and the U4/U6-U5 tri-snRNP complex, building blocks of the spliceosome. As a component of the minor spliceosome, involved in the splicing of U12-type introns in pre-mRNAs. The polypeptide is U5 small nuclear ribonucleoprotein 40 kDa protein (SNRNP40) (Bos taurus (Bovine)).